A 227-amino-acid chain; its full sequence is 7-cyano-7-deazaguanine synthase (227 aa).

Position 8 to 18 (8 to 18 (LSGGLDSATVL)) interacts with ATP. Positions 191, 201, 204, and 207 each coordinate Zn(2+).

It belongs to the QueC family. Requires Zn(2+) as cofactor.

The enzyme catalyses 7-carboxy-7-deazaguanine + NH4(+) + ATP = 7-cyano-7-deazaguanine + ADP + phosphate + H2O + H(+). Its pathway is purine metabolism; 7-cyano-7-deazaguanine biosynthesis. Functionally, catalyzes the ATP-dependent conversion of 7-carboxy-7-deazaguanine (CDG) to 7-cyano-7-deazaguanine (preQ(0)). This Paramagnetospirillum magneticum (strain ATCC 700264 / AMB-1) (Magnetospirillum magneticum) protein is 7-cyano-7-deazaguanine synthase.